A 132-amino-acid polypeptide reads, in one-letter code: uncharacterized protein (132 aa).

Residues Leu-66–Leu-86 form a helical membrane-spanning segment.

Its subcellular location is the membrane. This is an uncharacterized protein from Saccharomyces cerevisiae (strain ATCC 204508 / S288c) (Baker's yeast).